Reading from the N-terminus, the 438-residue chain is V-type ATP synthase beta chain (438 aa).

This sequence belongs to the ATPase alpha/beta chains family.

Functionally, produces ATP from ADP in the presence of a proton gradient across the membrane. The V-type beta chain is a regulatory subunit. The chain is V-type ATP synthase beta chain (atpB) from Chlamydia pneumoniae (Chlamydophila pneumoniae).